The primary structure comprises 33 residues: Cytochrome b6-f complex subunit 8 (33 aa).

Residues 2 to 22 form a helical membrane-spanning segment; that stretch reads LFTFAWASLAAIFTFSIAMVV.

The protein belongs to the PetN family. In terms of assembly, the 4 large subunits of the cytochrome b6-f complex are cytochrome b6, subunit IV (17 kDa polypeptide, PetD), cytochrome f and the Rieske protein, while the 4 small subunits are PetG, PetL, PetM and PetN. The complex functions as a dimer.

It localises to the cellular thylakoid membrane. Functionally, component of the cytochrome b6-f complex, which mediates electron transfer between photosystem II (PSII) and photosystem I (PSI), cyclic electron flow around PSI, and state transitions. This chain is Cytochrome b6-f complex subunit 8, found in Prochlorococcus marinus (strain SARG / CCMP1375 / SS120).